The chain runs to 867 residues: Ataxin-7 (867 aa).

Residues 1–15 (MSERAADDVRGEPRR) are compositionally biased toward basic and acidic residues. The tract at residues 1–59 (MSERAADDVRGEPRRAAGGAAAARQQQQQPQPLQPQRQHPPLRRPRAEDGGTGDTTTSA) is disordered. Low complexity predominate over residues 16–39 (AAGGAAAARQQQQQPQPLQPQRQH). The residue at position 222 (lysine 222) is an N6-acetyllysine. Residue lysine 243 forms a Glycyl lysine isopeptide (Lys-Gly) (interchain with G-Cter in SUMO); alternate linkage. Residue lysine 243 forms a Glycyl lysine isopeptide (Lys-Gly) (interchain with G-Cter in SUMO2); alternate linkage. One can recognise an SCA7 domain in the interval 320 to 387 (KRLSEREFDP…KAREKELIRH (68 aa)). The span at 379-400 (AREKELIRHDSQQVPHPLRDPH) shows a compositional bias: basic and acidic residues. 3 disordered regions span residues 379–483 (AREK…EESV), 600–711 (HGTT…SHSV), and 845–867 (TGNISGAQGLTNNSLLHQPKARP). 2 stretches are compositionally biased toward pro residues: residues 426 to 437 (PQTPSLPRPPGC) and 447 to 462 (IDPPPGQESPHPPLPA). Residues 472–481 (EEGEGDDREE) are compositionally biased toward acidic residues. The span at 619–647 (SVQSRQVSASSSPPSTPSGLSSVPSSPLS) shows a compositional bias: low complexity. Over residues 649-659 (KPQKWKPSKSI) the composition is skewed to basic residues. The span at 665–674 (SALSTNCHNA) shows a compositional bias: polar residues. Low complexity predominate over residues 689-711 (SSPLLVPSSSSSSSSSSSSSHSV). The segment covering 846–860 (GNISGAQGLTNNSLL) has biased composition (polar residues).

Belongs to the ataxin-7 family. As to quaternary structure, component of the SAGA transcription coactivator-HAT complex, at least composed of SUPT3H, GCN5L2, TAF5L, TAF6L, SUPT7L, TADA3L, TAD1L, TAF10, TAF12, TRRAP, TAF9 and ATXN7. The STAGA core complex is associated with a subcomplex required for histone deubiquitination composed of ATXN7L3, ENY2 and USP22. Interacts with SORBS1, PSMC1 and CRX. Interacts with TRRAP, GCN5L2 and TAF10. Interacts with alpha tubulin. In terms of processing, proteolytically cleaved by caspase-7 (CASP7). Post-translationally, sumoylation has no effect on subcellular location or interaction with components of the STAGA complex. As to expression, widely expressed in adult tissues, with the highest expression in heart, brain, liver and kidney.

The protein localises to the nucleus. Its subcellular location is the nucleolus. It localises to the nucleus matrix. The protein resides in the cytoplasm. It is found in the cytoskeleton. In terms of biological role, acts as a component of the SAGA (aka STAGA) transcription coactivator-HAT complex. Mediates the interaction of SAGA complex with the CRX and is involved in CRX-dependent gene activation. Probably involved in tethering the deubiquitination module within the SAGA complex. Necessary for microtubule cytoskeleton stabilization. Involved in neurodegeneration. The sequence is that of Ataxin-7 (Atxn7) from Mus musculus (Mouse).